We begin with the raw amino-acid sequence, 317 residues long: Transaldolase (317 aa).

Lysine 132 serves as the catalytic Schiff-base intermediate with substrate.

It belongs to the transaldolase family. Type 1 subfamily. In terms of assembly, homodimer.

The protein resides in the cytoplasm. The enzyme catalyses D-sedoheptulose 7-phosphate + D-glyceraldehyde 3-phosphate = D-erythrose 4-phosphate + beta-D-fructose 6-phosphate. It participates in carbohydrate degradation; pentose phosphate pathway; D-glyceraldehyde 3-phosphate and beta-D-fructose 6-phosphate from D-ribose 5-phosphate and D-xylulose 5-phosphate (non-oxidative stage): step 2/3. Functionally, transaldolase is important for the balance of metabolites in the pentose-phosphate pathway. This chain is Transaldolase, found in Shewanella amazonensis (strain ATCC BAA-1098 / SB2B).